The following is a 229-amino-acid chain: Endonuclease V (229 aa).

This sequence belongs to the endonuclease V family.

The protein resides in the cytoplasm. The catalysed reaction is Endonucleolytic cleavage at apurinic or apyrimidinic sites to products with a 5'-phosphate.. Its function is as follows. DNA repair enzyme involved in the repair of deaminated bases. Selectively cleaves double-stranded DNA at the second phosphodiester bond 3' to a deoxyinosine leaving behind the intact lesion on the nicked DNA. The polypeptide is Endonuclease V (Methanopyrus kandleri (strain AV19 / DSM 6324 / JCM 9639 / NBRC 100938)).